The chain runs to 76 residues: Toxin Acra III-1 (76 aa).

The LCN-type CS-alpha/beta domain maps to 4–67; the sequence is PGNYPLDTRG…IWDAVKNHCT (64 aa). Intrachain disulfides connect Cys18–Cys41, Cys27–Cys46, and Cys31–Cys48.

Belongs to the long (3 C-C) scorpion toxin superfamily. Sodium channel inhibitor family. Beta subfamily. In terms of tissue distribution, expressed by the venom gland.

It is found in the secreted. In terms of biological role, binds to sodium channels (Nav) and affects the channel activation process. The chain is Toxin Acra III-1 from Androctonus crassicauda (Arabian fat-tailed scorpion).